A 309-amino-acid polypeptide reads, in one-letter code: Heme-dependent oxidative N-demethylase beta subunit (309 aa).

In terms of domain architecture, FAD-binding FR-type spans Ser-2–His-103. Residues Phe-226–Leu-309 form the 2Fe-2S ferredoxin-type domain. Cys-260, Cys-265, Cys-268, and Cys-296 together coordinate [2Fe-2S] cluster.

This sequence belongs to the PDR/VanB family. The heme-dependent oxidative N-demethylase (HODM) is a heterotetramer composed of a catalytic alpha subunit, a FMN/2Fe-2S-dependent oxidoreductase beta subunit, a gamma subunit with putative aminotransferase activity, and a delta subunit of unknown function. Requires [2Fe-2S] cluster as cofactor. FMN serves as cofactor.

In terms of biological role, component of the heme-dependent oxidative N-demethylase (HODM) enzyme, that catalyzes the NADPH-dependent oxidation of dimethylamine (DMA) to methylamine (MA) and formaldehyde. Functions in bacterial methylated amine catabolism, linking alkylamine oxidation to the tetrahydrofolate C1 pool. The beta subunit of HODM binds FMN and a 2Fe-2S cluster, and likely reduces the ferric heme iron of the alpha subunit to ferrous using NADPH. In Ectopseudomonas mendocina (strain ymp) (Pseudomonas mendocina), this protein is Heme-dependent oxidative N-demethylase beta subunit.